A 193-amino-acid chain; its full sequence is Putative zinc finger protein 726P1 (193 aa).

The C2H2-type 1; degenerate zinc finger occupies 18 to 40; it reads YKCKKCGKTFNWSSILTNNKKIH. Residues 46-68 form a C2H2-type 2; atypical zinc finger; sequence YKCEECGKAFKQHSTLTTHKIIC. The C2H2-type 3; degenerate zinc finger occupies 74–96; that stretch reads YRCEECGKAFCQPSTLTRYKRMH. The segment at 102–124 adopts a C2H2-type 4 zinc-finger fold; it reads YKCEECGKAFTQFSTLTKHKRIH. Residues 130–152 form a C2H2-type 5; degenerate zinc finger; the sequence is YKCEESGKAFIWSSGLTEHRRVH. The C2H2-type 6 zinc finger occupies 158 to 180; the sequence is YKCEECGKALIQFSTLTRHKRIH.

The protein is Putative zinc finger protein 726P1 (ZNF726P1) of Homo sapiens (Human).